A 216-amino-acid polypeptide reads, in one-letter code: Large ribosomal subunit protein uL24m (216 aa).

The transit peptide at 1-9 directs the protein to the mitochondrion; that stretch reads MRLTLLLEM. The KOW domain maps to 56-89; the sequence is YFRGDTVEVLHGKDAGKQGKVTQVVRARNWVVVD.

The protein belongs to the universal ribosomal protein uL24 family. As to quaternary structure, component of the mitochondrial ribosome large subunit (39S) which comprises a 16S rRNA and about 50 distinct proteins. Ubiquitous. Expressed at greater levels in the kidney, adipose tissue, muscle and liver than the brain, heart, ovary and lung.

It is found in the mitochondrion. The sequence is that of Large ribosomal subunit protein uL24m (mrpl24) from Xenopus laevis (African clawed frog).